A 493-amino-acid polypeptide reads, in one-letter code: Accumulates dyads protein 4 (493 aa).

In terms of assembly, interacts with CNM67, SPO21/MPC70 and NUD1.

It is found in the cytoplasm. It localises to the cytoskeleton. The protein resides in the microtubule organizing center. Its subcellular location is the spindle pole body. In terms of biological role, involved in the pathway that organizes the shaping and sizing of the prospore membrane (PSM) during sporulation. May be required to stabilize the outer plaque of the spindle pole body (SPB). This is Accumulates dyads protein 4 (ADY4) from Saccharomyces cerevisiae (strain ATCC 204508 / S288c) (Baker's yeast).